The following is a 159-amino-acid chain: Ribosomal RNA large subunit methyltransferase H (159 aa).

S-adenosyl-L-methionine-binding positions include Leu-76, Gly-108, and 127-132; that span reads FSKMTF.

Belongs to the RNA methyltransferase RlmH family. Homodimer.

The protein resides in the cytoplasm. The enzyme catalyses pseudouridine(1915) in 23S rRNA + S-adenosyl-L-methionine = N(3)-methylpseudouridine(1915) in 23S rRNA + S-adenosyl-L-homocysteine + H(+). In terms of biological role, specifically methylates the pseudouridine at position 1915 (m3Psi1915) in 23S rRNA. This Clostridium botulinum (strain ATCC 19397 / Type A) protein is Ribosomal RNA large subunit methyltransferase H.